Reading from the N-terminus, the 167-residue chain is Interferon gamma (167 aa).

The N-terminal stretch at 1–23 (MSYTSYILAFQLCLILGSYGCYC) is a signal peptide. Gln-24 bears the Pyrrolidone carboxylic acid mark. 3 N-linked (GlcNAc...) asparagine glycosylation sites follow: Asn-41, Asn-108, and Asn-117.

The protein belongs to the type II (or gamma) interferon family. In terms of assembly, homodimer. Interacts with IFNGR1 (via extracellular domain); this interaction promotes IFNGR1 dimerization. As to expression, released primarily from activated T lymphocytes.

The protein localises to the secreted. In terms of biological role, type II interferon produced by immune cells such as T-cells and NK cells that plays crucial roles in antimicrobial, antiviral, and antitumor responses by activating effector immune cells and enhancing antigen presentation. Primarily signals through the JAK-STAT pathway after interaction with its receptor IFNGR1 to affect gene regulation. Upon IFNG binding, IFNGR1 intracellular domain opens out to allow association of downstream signaling components JAK2, JAK1 and STAT1, leading to STAT1 activation, nuclear translocation and transcription of IFNG-regulated genes. Many of the induced genes are transcription factors such as IRF1 that are able to further drive regulation of a next wave of transcription. Plays a role in class I antigen presentation pathway by inducing a replacement of catalytic proteasome subunits with immunoproteasome subunits. In turn, increases the quantity, quality, and repertoire of peptides for class I MHC loading. Increases the efficiency of peptide generation also by inducing the expression of activator PA28 that associates with the proteasome and alters its proteolytic cleavage preference. Up-regulates as well MHC II complexes on the cell surface by promoting expression of several key molecules such as cathepsins B/CTSB, H/CTSH, and L/CTSL. Participates in the regulation of hematopoietic stem cells during development and under homeostatic conditions by affecting their development, quiescence, and differentiation. The polypeptide is Interferon gamma (IFNG) (Oryctolagus cuniculus (Rabbit)).